The primary structure comprises 506 residues: NAD(P)H-quinone oxidoreductase subunit 2 (506 aa).

The next 13 helical transmembrane spans lie at 14 to 34, 42 to 62, 79 to 99, 108 to 128, 132 to 152, 167 to 187, 206 to 226, 240 to 260, 276 to 296, 302 to 322, 330 to 350, 374 to 394, and 409 to 429; these read AIIP…VDLA, WAPI…ALQW, LAIS…LISW, PIGE…LLCG, LISV…LSGY, LLVG…LYGL, FITS…IAAV, PTPV…AFAI, LLFT…ALAQ, MLAY…VSGT, VLYL…VILF, LGLS…GFFG, and LLVI…ISVI.

It belongs to the complex I subunit 2 family. As to quaternary structure, NDH-1 can be composed of about 15 different subunits; different subcomplexes with different compositions have been identified which probably have different functions.

Its subcellular location is the cellular thylakoid membrane. The enzyme catalyses a plastoquinone + NADH + (n+1) H(+)(in) = a plastoquinol + NAD(+) + n H(+)(out). The catalysed reaction is a plastoquinone + NADPH + (n+1) H(+)(in) = a plastoquinol + NADP(+) + n H(+)(out). Its function is as follows. NDH-1 shuttles electrons from an unknown electron donor, via FMN and iron-sulfur (Fe-S) centers, to quinones in the respiratory and/or the photosynthetic chain. The immediate electron acceptor for the enzyme in this species is believed to be plastoquinone. Couples the redox reaction to proton translocation, and thus conserves the redox energy in a proton gradient. Cyanobacterial NDH-1 also plays a role in inorganic carbon-concentration. The protein is NAD(P)H-quinone oxidoreductase subunit 2 of Prochlorococcus marinus (strain MIT 9215).